We begin with the raw amino-acid sequence, 347 residues long: Phosphoribosylformylglycinamidine cyclo-ligase (347 aa).

It belongs to the AIR synthase family.

The protein localises to the cytoplasm. The enzyme catalyses 2-formamido-N(1)-(5-O-phospho-beta-D-ribosyl)acetamidine + ATP = 5-amino-1-(5-phospho-beta-D-ribosyl)imidazole + ADP + phosphate + H(+). The protein operates within purine metabolism; IMP biosynthesis via de novo pathway; 5-amino-1-(5-phospho-D-ribosyl)imidazole from N(2)-formyl-N(1)-(5-phospho-D-ribosyl)glycinamide: step 2/2. This Alkalilimnicola ehrlichii (strain ATCC BAA-1101 / DSM 17681 / MLHE-1) protein is Phosphoribosylformylglycinamidine cyclo-ligase.